The chain runs to 137 residues: uncharacterized protein (137 aa).

A signal peptide spans 1–34 (MAALSRALGPLRTPAPPLWIGLFLVATGSQQSLA). The segment covering 33-45 (LAQPLPGNTTEAT) has biased composition (polar residues). Disordered regions lie at residues 33-54 (LAQPLPGNTTEATPRSLRASGS) and 98-137 (VLSPLHRGPSGHTEASAQRSHMGKLKEPQPQDHKPGLGAS). Asparagine 40 carries N-linked (GlcNAc...) asparagine glycosylation. Basic and acidic residues predominate over residues 121-137 (KLKEPQPQDHKPGLGAS).

Its subcellular location is the secreted. This is an uncharacterized protein from Homo sapiens (Human).